The following is a 45-amino-acid chain: MCYYHNYYGSLDYGCSYGSEYGNSGYACNFPCSYGRFLLAPRKKF.

This sequence belongs to the KRTAP type 20 family. In terms of assembly, interacts with hair keratins.

Functionally, in the hair cortex, hair keratin intermediate filaments are embedded in an interfilamentous matrix, consisting of hair keratin-associated proteins (KRTAP), which are essential for the formation of a rigid and resistant hair shaft through their extensive disulfide bond cross-linking with abundant cysteine residues of hair keratins. The matrix proteins include the high-sulfur and high-glycine-tyrosine keratins. In Homo sapiens (Human), this protein is Keratin-associated protein 22-2 (KRTAP22-2).